We begin with the raw amino-acid sequence, 489 residues long: Diaminopimelate decarboxylase 2, chloroplastic (489 aa).

A chloroplast-targeting transit peptide spans 1-50 (MAAVTQFLSQPSSIRGTLNQYQLNQTSLSRIPFLSLKSTLKPLKRLSVKA). Alanine 51 carries the post-translational modification N-acetylalanine. Lysine 130 is modified (N6-(pyridoxal phosphate)lysine). Residues glycine 309 and 345–348 (EPGR) each bind pyridoxal 5'-phosphate. Positions 348, 384, and 388 each coordinate substrate. The active-site Proton donor is cysteine 416. Positions 417 and 445 each coordinate substrate. Tyrosine 445 serves as a coordination point for pyridoxal 5'-phosphate.

This sequence belongs to the Orn/Lys/Arg decarboxylase class-II family. LysA subfamily. In terms of assembly, homodimer. The cofactor is pyridoxal 5'-phosphate.

It is found in the plastid. The protein resides in the chloroplast. The enzyme catalyses meso-2,6-diaminopimelate + H(+) = L-lysine + CO2. The protein operates within amino-acid biosynthesis; L-lysine biosynthesis via DAP pathway; L-lysine from DL-2,6-diaminopimelate: step 1/1. Functionally, specifically catalyzes the decarboxylation of meso-diaminopimelate (meso-DAP) to L-lysine. In Arabidopsis thaliana (Mouse-ear cress), this protein is Diaminopimelate decarboxylase 2, chloroplastic (LYSA2).